Here is a 431-residue protein sequence, read N- to C-terminus: Citrate synthase (431 aa).

Residues His306 and Asp364 contribute to the active site.

It belongs to the citrate synthase family.

It catalyses the reaction oxaloacetate + acetyl-CoA + H2O = citrate + CoA + H(+). It participates in carbohydrate metabolism; tricarboxylic acid cycle; isocitrate from oxaloacetate: step 1/2. This chain is Citrate synthase (gltA), found in Bartonella henselae (strain ATCC 49882 / DSM 28221 / CCUG 30454 / Houston 1) (Rochalimaea henselae).